The chain runs to 263 residues: Interleukin-22 receptor subunit alpha-2 (263 aa).

A signal peptide spans 1–21 (MMPKHCFLGFLISFFLTGVAG). 3 Fibronectin type-III domains span residues 26–68 (HESL…KIMF), 100–161 (GQRQ…TKID), and 162–263 (PPVM…VEIP). Asn-56 carries an N-linked (GlcNAc...) asparagine glycan. Cysteines 110 and 118 form a disulfide. Asn-166, Asn-171, Asn-192, and Asn-209 each carry an N-linked (GlcNAc...) asparagine glycan. Cysteines 238 and 259 form a disulfide.

This sequence belongs to the type II cytokine receptor family. Expressed in placenta, spleen, breast, skin and lung. Also detected in intestinal tract, testis, brain, heart and thymus. No expression found in prostate, bladder, kidney, ovary, muscle, bone marrow, liver and uterus. Isoform 1 is expressed only in placenta. Isoform 2 is expressed in placenta and breast and at lower level in spleen, skin, thymus and stomach.

It is found in the secreted. In terms of biological role, isoform 2 is a receptor for IL22. Binds to IL22, prevents interaction with the functional IL-22R complex and blocks the activity of IL22 (in vitro). May play an important role as an IL22 antagonist in the regulation of inflammatory responses. Isoform 1 may play a role in establishing and maintaining successful pregnancy. In Homo sapiens (Human), this protein is Interleukin-22 receptor subunit alpha-2 (IL22RA2).